Reading from the N-terminus, the 649-residue chain is 1-deoxy-D-xylulose-5-phosphate synthase (649 aa).

Residues histidine 84 and 125 to 127 each bind thiamine diphosphate; that span reads GHS. Aspartate 156 is a Mg(2+) binding site. Residues 157 to 158, asparagine 185, phenylalanine 292, and glutamate 385 each bind thiamine diphosphate; that span reads GS. Asparagine 185 provides a ligand contact to Mg(2+).

This sequence belongs to the transketolase family. DXPS subfamily. Homodimer. The cofactor is Mg(2+). Thiamine diphosphate is required as a cofactor.

It carries out the reaction D-glyceraldehyde 3-phosphate + pyruvate + H(+) = 1-deoxy-D-xylulose 5-phosphate + CO2. The protein operates within metabolic intermediate biosynthesis; 1-deoxy-D-xylulose 5-phosphate biosynthesis; 1-deoxy-D-xylulose 5-phosphate from D-glyceraldehyde 3-phosphate and pyruvate: step 1/1. Catalyzes the acyloin condensation reaction between C atoms 2 and 3 of pyruvate and glyceraldehyde 3-phosphate to yield 1-deoxy-D-xylulose-5-phosphate (DXP). This is 1-deoxy-D-xylulose-5-phosphate synthase from Saccharophagus degradans (strain 2-40 / ATCC 43961 / DSM 17024).